The sequence spans 567 residues: Microtubule-associated protein 70-1 (567 aa).

Residues V38–D341 are a coiled coil. The interval I220 to S440 is required for targeting to microtubules. 2 disordered regions span residues K425–S457 and L534–M567. Positions S440–N453 are enriched in basic and acidic residues. Residues K516–F545 adopt a coiled-coil conformation.

This sequence belongs to the MAP70 family.

The protein localises to the cytoplasm. It localises to the cytoskeleton. In terms of biological role, plant-specific protein that interact with microtubules. This is Microtubule-associated protein 70-1 (MAP70.1) from Oryza sativa subsp. japonica (Rice).